The following is a 755-amino-acid chain: Xaa-Pro dipeptidyl-peptidase (755 aa).

Catalysis depends on charge relay system residues Ser-348, Asp-468, and His-498.

It belongs to the peptidase S15 family. In terms of assembly, homodimer.

It is found in the cytoplasm. The enzyme catalyses Hydrolyzes Xaa-Pro-|- bonds to release unblocked, N-terminal dipeptides from substrates including Ala-Pro-|-p-nitroanilide and (sequentially) Tyr-Pro-|-Phe-Pro-|-Gly-Pro-|-Ile.. Functionally, removes N-terminal dipeptides sequentially from polypeptides having unsubstituted N-termini provided that the penultimate residue is proline. This chain is Xaa-Pro dipeptidyl-peptidase, found in Streptococcus thermophilus (strain ATCC BAA-250 / LMG 18311).